The sequence spans 238 residues: Serine protease SplE (238 aa).

A signal peptide spans 1 to 36 (MNKNIIIKSIAALTILTSVTGVGTTMVEGIQQTAKA). Active-site charge relay system residues include His-75, Asp-113, and Ser-191.

Belongs to the peptidase S1B family.

It is found in the secreted. In Staphylococcus aureus, this protein is Serine protease SplE (splE).